We begin with the raw amino-acid sequence, 347 residues long: MASAQVPFSFPLAHFLIFVFVTSTIIHLQQRIVKLQTLSEKELQAVQMSSPNAARTDMQQSAKLQGIFTINSIGRLGNQMGEYATLFALARMNGRLAFIPESMHNALAPIFRISLPVLHSDTARRIPWQNYHLNDWMEERYRHIPGQYVRFTGYPCSWTFYHHLRPEILKEFTLHDHVREEAQAFLRGLRVNGSQPSTFVGVHVRRGDYVHVMPKVWKGVVADRGYLEKALDRFRARYSSPVFVVTSNGMAWCRENINTSLGDVVFAGNGIEGSPAKDFALLTQCNHTIMTIGTFGIWAAYLAGGDTIYLANYTLPDSPFLKIFKPAAAFLPEWMGIPADLSPLLKH.

At 1 to 5 (MASAQ) the chain is on the cytoplasmic side. Residues 6–26 (VPFSFPLAHFLIFVFVTSTII) traverse the membrane as a helical; Signal-anchor for type II membrane protein segment. Residues 27–347 (HLQQRIVKLQ…PADLSPLLKH (321 aa)) are Lumenal-facing. N-linked (GlcNAc...) asparagine glycans are attached at residues Asn192, Asn258, Asn286, and Asn312.

This sequence belongs to the glycosyltransferase 11 family. As to expression, expressed in stomach, colon, ovary and uterus, specifically in luminal uterine epithelium. Expressed in various tissues including heart, liver, kidney, testis, epididymis, small intestine,and cecum. Expressed in duodenum, jejunum and ileum.

The protein resides in the golgi apparatus. The protein localises to the golgi stack membrane. The enzyme catalyses a beta-D-galactosyl-(1-&gt;3)-N-acetyl-beta-D-glucosaminyl derivative + GDP-beta-L-fucose = an alpha-L-Fuc-(1-&gt;2)-beta-D-Gal-(1-&gt;3)-beta-D-GlcNAc derivative + GDP + H(+). It carries out the reaction a beta-D-galactosyl-(1-&gt;4)-N-acetyl-beta-D-glucosaminyl derivative + GDP-beta-L-fucose = an alpha-L-Fuc-(1-&gt;2)-beta-D-Gal-(1-&gt;4)-beta-D-GlcNAc derivative + GDP + H(+). It catalyses the reaction a neolactoside nLc4Cer + GDP-beta-L-fucose = a neolactoside IV(2)-alpha-Fuc-nLc4Cer + GDP + H(+). The catalysed reaction is a neolactoside nLc4Cer(d18:1(4E)) + GDP-beta-L-fucose = a neolactoside IV(2)-alpha-Fuc-nLc4Cer(d18:1(4E)) + GDP + H(+). The enzyme catalyses a ganglioside GM1 + GDP-beta-L-fucose = a ganglioside Fuc-GM1 + GDP + H(+). It carries out the reaction a ganglioside GA1 + GDP-beta-L-fucose = a ganglioside Fuc-GA1 + GDP + H(+). It catalyses the reaction Lc4Cer + GDP-beta-L-fucose = alpha-L-fucosyl-(1-&gt;2)-beta-D-galactosyl-(1-&gt;3)-N-acetyl-beta-D-glucosaminyl-(1-&gt;3)-beta-D-galactosyl-(1-&gt;4)-beta-D-glucosyl-(1&lt;-&gt;1')-ceramide + GDP + H(+). The catalysed reaction is a beta-D-Gal-(1-&gt;3)-beta-D-GlcNAc-(1-&gt;3)-beta-D-Gal-(1-&gt;4)-beta-D-Glc-(1&lt;-&gt;1')-Cer(d18:1(4E)) + GDP-beta-L-fucose = alpha-L-fucosyl-(1-&gt;2)- beta-D-galactosyl-(1-&gt;3)-N-acetyl-beta-D-glucosaminyl-(1-&gt;3)-beta-D-galactosyl-(1-&gt;4)-beta-D-glucosyl-(1&lt;-&gt;1')-N-acylsphing-4-enine + GDP + H(+). The enzyme catalyses a ganglioside GD1b + GDP-beta-L-fucose = a ganglioside Fuc-GD1b + GDP + H(+). It carries out the reaction a ganglioside GM1 (d18:1(4E)) + GDP-beta-L-fucose = a ganglioside Fuc-GM1 (d18:1(4E)) + GDP + H(+). It catalyses the reaction a globoside GalGb4Cer (d18:1(4E)) + GDP-beta-L-fucose = a globoside Globo-H (d18:1(4E)) + GDP + H(+). The catalysed reaction is a lactoside III(4)-a-Fuc-Lc4Cer + GDP-beta-L-fucose = a lactoside IV(2),III(4)-a-[Fuc]2-Lc4Cer + GDP + H(+). The enzyme catalyses beta-D-galactosyl-(1-&gt;3)-N-acetyl-D-galactosamine + GDP-beta-L-fucose = alpha-L-fucosyl-(1-&gt;2)-beta-D-galactosyl-(1-&gt;3)-N-acetyl-D-galactosamine + GDP + H(+). It participates in protein modification; protein glycosylation. Functionally, catalyzes the transfer of L-fucose, from a guanosine diphosphate-beta-L-fucose, to the terminal galactose on both O- and N-linked glycans chains of cell surface glycoproteins and glycolipids and the resulting epitope regulates several processes such as cell-cell interaction including host-microbe interaction, cell surface expression and cell proliferation. Preferentially fucosylates gangliosides GA1 and GM1 in the antrum, cecum and colon and in the female reproductive organs. Fucosylated host glycoproteins or glycolipids mediate interaction with intestinal microbiota influencing its composition. Creates a soluble precursor oligosaccharide FuC-alpha ((1,2)Galbeta-) called the H antigen which is an essential substrate for the final step in the soluble ABO blood group antigen synthesis pathway. The chain is Galactoside alpha-(1,2)-fucosyltransferase 2 from Mus musculus (Mouse).